The following is a 745-amino-acid chain: Inhibitor of nuclear factor kappa-B kinase subunit alpha (745 aa).

The 286-residue stretch at 15-300 folds into the Protein kinase domain; it reads WEMRERLGTG…IDLTLKQPRC (286 aa). ATP is bound by residues 21 to 29 and Lys44; that span reads LGTGGFGNV. Phosphothreonine; by PKB/AKT1 and SGK1 is present on Thr23. The Proton acceptor role is filled by Asp144. Ser176 is subject to Phosphoserine; by MAP3K14. Ser180 carries the phosphoserine; by SGK1 modification. The interval 455–476 is leucine-zipper; that stretch reads LLRYNANLTKMKNTLISASQQL. An NEMO-binding region spans residues 738 to 743; that stretch reads LDWSWL.

The protein belongs to the protein kinase superfamily. Ser/Thr protein kinase family. I-kappa-B kinase subfamily. In terms of assembly, component of the I-kappa-B-kinase (IKK) core complex consisting of CHUK, IKBKB and IKBKG; probably four alpha/CHUK-beta/IKBKB dimers are associated with four gamma/IKBKG subunits. The IKK core complex seems to associate with regulatory or adapter proteins to form a IKK-signalosome holo-complex. The IKK complex associates with TERF2IP/RAP1, leading to promote IKK-mediated phosphorylation of RELA/p65. Part of a complex composed of NCOA2, NCOA3, CHUK/IKKA, IKBKB, IKBKG and CREBBP. Part of a 70-90 kDa complex at least consisting of CHUK/IKKA, IKBKB, NFKBIA, RELA, ELP1 and MAP3K14. Directly interacts with TRPC4AP. May interact with TRAF2. Interacts with NALP2. May interact with MAVS/IPS1. Interacts with ARRB1 and ARRB2. Interacts with NLRC5; prevents CHUK phosphorylation and kinase activity. Interacts with PIAS1; this interaction induces PIAS1 phosphorylation. Interacts with ZNF268 isoform 2; the interaction is further increased in a TNF-alpha-dependent manner. Interacts with LRRC14. Interacts with SASH1. Directly interacts with DDX3X after the physiological activation of the TLR7 and TLR8 pathways; this interaction enhances CHUK autophosphorylation. In terms of processing, ubiquitinated by TRIM56 via 'Lys-63'-linked ubiquitination, promoting activation of CHUK/IKKA. Phosphorylated by MAP3K14/NIK, AKT and to a lesser extent by MEKK1, and dephosphorylated by PP2A. Autophosphorylated. In terms of tissue distribution, ubiquitous only for isoform 1, isoforms 2 and 3 are expressed predominantly in brain and T-lymphocytes.

It is found in the cytoplasm. The protein localises to the nucleus. It catalyses the reaction L-seryl-[I-kappa-B protein] + ATP = O-phospho-L-seryl-[I-kappa-B protein] + ADP + H(+). With respect to regulation, activated when phosphorylated and inactivated when dephosphorylated. In terms of biological role, serine kinase that plays an essential role in the NF-kappa-B signaling pathway which is activated by multiple stimuli such as inflammatory cytokines, bacterial or viral products, DNA damages or other cellular stresses. Acts as a part of the canonical IKK complex in the conventional pathway of NF-kappa-B activation and phosphorylates inhibitors of NF-kappa-B on serine residues. These modifications allow polyubiquitination of the inhibitors and subsequent degradation by the proteasome. In turn, free NF-kappa-B is translocated into the nucleus and activates the transcription of hundreds of genes involved in immune response, growth control, or protection against apoptosis. Negatively regulates the pathway by phosphorylating the scaffold protein TAXBP1 and thus promoting the assembly of the A20/TNFAIP3 ubiquitin-editing complex (composed of A20/TNFAIP3, TAX1BP1, and the E3 ligases ITCH and RNF11). Therefore, CHUK plays a key role in the negative feedback of NF-kappa-B canonical signaling to limit inflammatory gene activation. As part of the non-canonical pathway of NF-kappa-B activation, the MAP3K14-activated CHUK/IKKA homodimer phosphorylates NFKB2/p100 associated with RelB, inducing its proteolytic processing to NFKB2/p52 and the formation of NF-kappa-B RelB-p52 complexes. In turn, these complexes regulate genes encoding molecules involved in B-cell survival and lymphoid organogenesis. Also participates in the negative feedback of the non-canonical NF-kappa-B signaling pathway by phosphorylating and destabilizing MAP3K14/NIK. Within the nucleus, phosphorylates CREBBP and consequently increases both its transcriptional and histone acetyltransferase activities. Modulates chromatin accessibility at NF-kappa-B-responsive promoters by phosphorylating histones H3 at 'Ser-10' that are subsequently acetylated at 'Lys-14' by CREBBP. Additionally, phosphorylates the CREBBP-interacting protein NCOA3. Also phosphorylates FOXO3 and may regulate this pro-apoptotic transcription factor. Phosphorylates RIPK1 at 'Ser-25' which represses its kinase activity and consequently prevents TNF-mediated RIPK1-dependent cell death. Phosphorylates AMBRA1 following mitophagy induction, promoting AMBRA1 interaction with ATG8 family proteins and its mitophagic activity. The polypeptide is Inhibitor of nuclear factor kappa-B kinase subunit alpha (Chuk) (Mus musculus (Mouse)).